We begin with the raw amino-acid sequence, 115 residues long: MITLHMVVLPFLITLFLLLIIKFLPMNVPDKEKLSPYECGFDPSGSARLPFSMKFFLVAILFILFDLEIILLFPLAWALNSQSHSNAIILASVFVIILTLGLIYEWLKGGLEWTE.

A run of 3 helical transmembrane segments spans residues 1-21 (MITL…LLII), 55-75 (FFLV…LFPL), and 87-107 (AIIL…YEWL).

It belongs to the complex I subunit 3 family.

The protein resides in the mitochondrion membrane. The enzyme catalyses a ubiquinone + NADH + 5 H(+)(in) = a ubiquinol + NAD(+) + 4 H(+)(out). Its function is as follows. Core subunit of the mitochondrial membrane respiratory chain NADH dehydrogenase (Complex I) that is believed to belong to the minimal assembly required for catalysis. Complex I functions in the transfer of electrons from NADH to the respiratory chain. The immediate electron acceptor for the enzyme is believed to be ubiquinone. The sequence is that of NADH-ubiquinone oxidoreductase chain 3 (MT-ND3) from Myxine glutinosa (Atlantic hagfish).